A 352-amino-acid chain; its full sequence is Nicotinate-nucleotide--dimethylbenzimidazole phosphoribosyltransferase (352 aa).

The Proton acceptor role is filled by E318.

The protein belongs to the CobT family.

It catalyses the reaction 5,6-dimethylbenzimidazole + nicotinate beta-D-ribonucleotide = alpha-ribazole 5'-phosphate + nicotinate + H(+). The protein operates within nucleoside biosynthesis; alpha-ribazole biosynthesis; alpha-ribazole from 5,6-dimethylbenzimidazole: step 1/2. Functionally, catalyzes the synthesis of alpha-ribazole-5'-phosphate from nicotinate mononucleotide (NAMN) and 5,6-dimethylbenzimidazole (DMB). This chain is Nicotinate-nucleotide--dimethylbenzimidazole phosphoribosyltransferase, found in Dehalococcoides mccartyi (strain CBDB1).